The primary structure comprises 72 residues: MKNSESIKEFKKLNSSEINEKIDQLRKDLFDLRFKQATRQLNETHQFKIIKKQVAQLLTLSKSQSNSQKSSD.

The protein belongs to the universal ribosomal protein uL29 family.

The chain is Large ribosomal subunit protein uL29 from Prochlorococcus marinus (strain MIT 9515).